The chain runs to 964 residues: Syndetin (964 aa).

N-acetylmethionine is present on M1. The interval 1-25 (MQKIKSLMTRQGLKSPPESLNDLGA) is disordered. Phosphoserine is present on S15. 2 coiled-coil regions span residues 81–107 (LNLQ…VADL) and 216–244 (YSCI…LSKI). Phosphoserine is present on residues S494, S498, S559, and S561. Residues 532–563 (DEETEDVLASNGYESDEQEKSAYQDYDSDSDV) form a disordered region. A Glycyl lysine isopeptide (Lys-Gly) (interchain with G-Cter in SUMO1); alternate cross-link involves residue K963. Residue K963 forms a Glycyl lysine isopeptide (Lys-Gly) (interchain with G-Cter in SUMO2); alternate linkage.

The protein belongs to the syndetin family. Component of the endosome-associated retrograde protein (EARP) complex, composed of VPS51, VPS52, VPS53 and VPS50/Syndetin. The EARP complex interacts with EIPR1. Interacts with VPS51 and VPS53 in an EIPR1-independent manner.

It is found in the recycling endosome. The protein resides in the membrane. Its function is as follows. Acts as a component of the EARP complex that is involved in endocytic recycling. The EARP complex associates with Rab4-positive endosomes and promotes recycling of internalized transferrin receptor (TFRC) to the plasma membrane. Within the EARP complex, required to tether the complex to recycling endosomes. Not involved in retrograde transport from early and late endosomes to the trans-Golgi network (TGN). The polypeptide is Syndetin (Mus musculus (Mouse)).